The following is a 173-amino-acid chain: Phosphopantetheine adenylyltransferase (173 aa).

Position 9 (Ser9) interacts with substrate. ATP-binding positions include 9 to 10 (SF) and His17. Substrate-binding residues include Lys41, Thr73, and Arg87. Residues 88–90 (GVR), Glu98, and 123–129 (YQYLSSS) each bind ATP.

It belongs to the bacterial CoaD family. As to quaternary structure, homohexamer. It depends on Mg(2+) as a cofactor.

It localises to the cytoplasm. It carries out the reaction (R)-4'-phosphopantetheine + ATP + H(+) = 3'-dephospho-CoA + diphosphate. Its pathway is cofactor biosynthesis; coenzyme A biosynthesis; CoA from (R)-pantothenate: step 4/5. Functionally, reversibly transfers an adenylyl group from ATP to 4'-phosphopantetheine, yielding dephospho-CoA (dPCoA) and pyrophosphate. The protein is Phosphopantetheine adenylyltransferase of Limosilactobacillus fermentum (strain NBRC 3956 / LMG 18251) (Lactobacillus fermentum).